The sequence spans 454 residues: MTQLSVVILAAGKGTRMYSDLPKVLHTVAGKPMVQHVIDTAKQIDAKQIHLIYGHGGELLQQRLSSEPVNWVLQAEQLGTGHAMQQAAPFFADDENILMLYGDAPLITKETLERLIAAKPANGIALLTVELENPNGYGRIIRENGSVVAIVEQKDANAEQLKICEVNTGVMVASGASFKKWLANLNNNNAQGEYYITDVIAMANQDGYKVQAVQASEFMEVEGANNRLQLAALERFYQKTQAEKLLLAGVRLIDPARFDIRGSLTHGKDVEIDVNVIIEGEVKLGNRVRICAGCVLKNCEIGDDVEIKPYSVIEDAVVGKAAQIGPFSRLRPGANLAEETHVGNFVEIKNAQIGKGSKVNHLTYVGDAEVGSNCNIGAGVITCNYDGANKFKTIIGNNVFVGSDSQLVAPVTIADGATIGAGATVTKDVAENELVISRVPQRHIQGWQRPTKKK.

Residues 1-227 (MTQLSVVILA…FMEVEGANNR (227 aa)) are pyrophosphorylase. Residues 9–12 (LAAG), Lys23, Gln74, 79–80 (GT), 101–103 (YGD), Gly138, Glu152, Asn167, and Asn225 contribute to the UDP-N-acetyl-alpha-D-glucosamine site. Asp103 serves as a coordination point for Mg(2+). Position 225 (Asn225) interacts with Mg(2+). The interval 228–248 (LQLAALERFYQKTQAEKLLLA) is linker. The N-acetyltransferase stretch occupies residues 249–454 (GVRLIDPARF…QGWQRPTKKK (206 aa)). UDP-N-acetyl-alpha-D-glucosamine is bound by residues Arg331 and Lys349. The active-site Proton acceptor is His361. UDP-N-acetyl-alpha-D-glucosamine contacts are provided by Tyr364 and Asn375. Acetyl-CoA contacts are provided by residues Ala378, 384–385 (NY), Ser403, Ala421, and Arg438.

The protein in the N-terminal section; belongs to the N-acetylglucosamine-1-phosphate uridyltransferase family. In the C-terminal section; belongs to the transferase hexapeptide repeat family. As to quaternary structure, homotrimer. Mg(2+) is required as a cofactor.

Its subcellular location is the cytoplasm. The enzyme catalyses alpha-D-glucosamine 1-phosphate + acetyl-CoA = N-acetyl-alpha-D-glucosamine 1-phosphate + CoA + H(+). It catalyses the reaction N-acetyl-alpha-D-glucosamine 1-phosphate + UTP + H(+) = UDP-N-acetyl-alpha-D-glucosamine + diphosphate. It functions in the pathway nucleotide-sugar biosynthesis; UDP-N-acetyl-alpha-D-glucosamine biosynthesis; N-acetyl-alpha-D-glucosamine 1-phosphate from alpha-D-glucosamine 6-phosphate (route II): step 2/2. The protein operates within nucleotide-sugar biosynthesis; UDP-N-acetyl-alpha-D-glucosamine biosynthesis; UDP-N-acetyl-alpha-D-glucosamine from N-acetyl-alpha-D-glucosamine 1-phosphate: step 1/1. It participates in bacterial outer membrane biogenesis; LPS lipid A biosynthesis. Its function is as follows. Catalyzes the last two sequential reactions in the de novo biosynthetic pathway for UDP-N-acetylglucosamine (UDP-GlcNAc). The C-terminal domain catalyzes the transfer of acetyl group from acetyl coenzyme A to glucosamine-1-phosphate (GlcN-1-P) to produce N-acetylglucosamine-1-phosphate (GlcNAc-1-P), which is converted into UDP-GlcNAc by the transfer of uridine 5-monophosphate (from uridine 5-triphosphate), a reaction catalyzed by the N-terminal domain. This Actinobacillus pleuropneumoniae serotype 3 (strain JL03) protein is Bifunctional protein GlmU.